Reading from the N-terminus, the 140-residue chain is 3-hydroxyacyl-[acyl-carrier-protein] dehydratase FabZ (140 aa).

The active site involves H48.

The protein belongs to the thioester dehydratase family. FabZ subfamily.

The protein localises to the cytoplasm. The catalysed reaction is a (3R)-hydroxyacyl-[ACP] = a (2E)-enoyl-[ACP] + H2O. In terms of biological role, involved in unsaturated fatty acids biosynthesis. Catalyzes the dehydration of short chain beta-hydroxyacyl-ACPs and long chain saturated and unsaturated beta-hydroxyacyl-ACPs. The chain is 3-hydroxyacyl-[acyl-carrier-protein] dehydratase FabZ from Exiguobacterium sibiricum (strain DSM 17290 / CCUG 55495 / CIP 109462 / JCM 13490 / 255-15).